Here is a 200-residue protein sequence, read N- to C-terminus: Ribonuclease HII (200 aa).

One can recognise an RNase H type-2 domain in the interval 11-200 (QSIAGVDEVG…VRRALISLTG (190 aa)). Positions 17, 18, and 109 each coordinate a divalent metal cation.

The protein belongs to the RNase HII family. Requires Mn(2+) as cofactor. Mg(2+) is required as a cofactor.

Its subcellular location is the cytoplasm. The enzyme catalyses Endonucleolytic cleavage to 5'-phosphomonoester.. Functionally, endonuclease that specifically degrades the RNA of RNA-DNA hybrids. This chain is Ribonuclease HII, found in Hamiltonella defensa subsp. Acyrthosiphon pisum (strain 5AT).